The sequence spans 721 residues: MTDTPVEKLTEPEAVSELERLAREIAHHDELYHANDRPEISDAEYDALKRRNDAIEARFPHLVRTDSPSLRVGTAPVSKFAQVVHARPMLSLGNAFSDDDVRDFVGSVYRFLGPLPDNSIAFTAEPKIDGLSMSIRYENGILISGATRGDGTTGENVTTNIRTIAEIPNRLPAGAPSVVEVRGEVYMAKSDFLALNEQMAAEGKQTYVNPRNTAAGSLRQLDAKVTASRKLKFFAYAWGEMSDMPADTQMGMVEIFREWGFPVNPLTKRLHGADELLAHYRAIGLERAQLDYDIDGVVYKVDRLDLQTRLGFRSRSPRWAIAHKFPAEQATTILRGIDIQVGRTGALTPVARLEPITVGGVVVTNATLHNEDYIKGIGLKGERIRADEHDIRVGDTVIVQRAGDVIPQIVDVVLEKRKADATPFVFPHECPVCHSHAVREEGEAVYRCTGGLTCAAQAVERIRHFVSRNAFDIEGLGEKQVEFFFHAEDDKLKIKSPADIFTLQQRQAESPLKKLENIEGFGATSVKKLYDAINDRREIALHRFLFGLGIRHVGEVNAKRFARAYLSYAAFEEAALEAVPPKEGDRTDKGNEAWQELIAVEGIGSIVAEAVVDFYAEPHNREVLDNLFKAGVTPVDEVALVSTGSPVEGKTVVFTGSLERMSRDEAKAMAERYGAKTAGSVSKKTDLVVAGPGAGSKLAKASELGIEVIDEDAWFTLVGEE.

Residues aspartate 42–aspartate 46, serine 91–leucine 92, and glutamate 125 contribute to the NAD(+) site. Lysine 127 functions as the N6-AMP-lysine intermediate in the catalytic mechanism. NAD(+) is bound by residues arginine 148, glutamate 184, lysine 300, and lysine 324. Positions 430, 433, 448, and 454 each coordinate Zn(2+). A BRCT domain is found at serine 642–glutamate 721.

The protein belongs to the NAD-dependent DNA ligase family. LigA subfamily. Mg(2+) is required as a cofactor. The cofactor is Mn(2+).

It carries out the reaction NAD(+) + (deoxyribonucleotide)n-3'-hydroxyl + 5'-phospho-(deoxyribonucleotide)m = (deoxyribonucleotide)n+m + AMP + beta-nicotinamide D-nucleotide.. In terms of biological role, DNA ligase that catalyzes the formation of phosphodiester linkages between 5'-phosphoryl and 3'-hydroxyl groups in double-stranded DNA using NAD as a coenzyme and as the energy source for the reaction. It is essential for DNA replication and repair of damaged DNA. The sequence is that of DNA ligase from Brucella anthropi (strain ATCC 49188 / DSM 6882 / CCUG 24695 / JCM 21032 / LMG 3331 / NBRC 15819 / NCTC 12168 / Alc 37) (Ochrobactrum anthropi).